Here is a 255-residue protein sequence, read N- to C-terminus: Hydroxyacylglutathione hydrolase (255 aa).

7 residues coordinate Zn(2+): His-55, His-57, Asp-59, His-60, His-113, Asp-132, and His-170.

It belongs to the metallo-beta-lactamase superfamily. Glyoxalase II family. As to quaternary structure, monomer. Requires Zn(2+) as cofactor.

It carries out the reaction an S-(2-hydroxyacyl)glutathione + H2O = a 2-hydroxy carboxylate + glutathione + H(+). It participates in secondary metabolite metabolism; methylglyoxal degradation; (R)-lactate from methylglyoxal: step 2/2. Its function is as follows. Thiolesterase that catalyzes the hydrolysis of S-D-lactoyl-glutathione to form glutathione and D-lactic acid. This Methylobacterium nodulans (strain LMG 21967 / CNCM I-2342 / ORS 2060) protein is Hydroxyacylglutathione hydrolase.